Here is a 472-residue protein sequence, read N- to C-terminus: Glutamate--tRNA ligase (472 aa).

The short motif at 9–19 (PSPTGPLHIGS) is the 'HIGH' region element. A 'KMSKS' region motif is present at residues 237–241 (KLSKR). Lysine 240 is a binding site for ATP.

The protein belongs to the class-I aminoacyl-tRNA synthetase family. Glutamate--tRNA ligase type 1 subfamily. As to quaternary structure, monomer.

The protein localises to the cytoplasm. The enzyme catalyses tRNA(Glu) + L-glutamate + ATP = L-glutamyl-tRNA(Glu) + AMP + diphosphate. Its function is as follows. Catalyzes the attachment of glutamate to tRNA(Glu) in a two-step reaction: glutamate is first activated by ATP to form Glu-AMP and then transferred to the acceptor end of tRNA(Glu). This is Glutamate--tRNA ligase from Buchnera aphidicola subsp. Baizongia pistaciae (strain Bp).